The following is a 178-amino-acid chain: Oligoribonuclease (178 aa).

An Exonuclease domain is found at 7–168; that stretch reads LIWIDLEMTG…DDIRESIAEL (162 aa). The active site involves Tyr128.

Belongs to the oligoribonuclease family.

It is found in the cytoplasm. Functionally, 3'-to-5' exoribonuclease specific for small oligoribonucleotides. The polypeptide is Oligoribonuclease (Francisella tularensis subsp. holarctica (strain OSU18)).